A 359-amino-acid chain; its full sequence is MSKPPSDPPRRPPAAFTYEDEATERHDNGRQAERRRKPESFSENIVVTADEDDPFLNPDKDLSAVPVATPLRRRTSFGKIAAGAFGILLSLGIGLWTDSLIRDLFTRADWLGYLALAVLAVGVLAVLALVIRETSGMMRLAAVQAIKAEAEAAMVETRPAKARAVVARLVTLLSANPETSKGRATLKATEGEVIDPPHLIALAERELLTPLDRKARALIVNASKRVSLVTAVSPRAVVDLLYVLYEAVRLIRAMAELYGGRPGTLGMFRLLRDVLAHLAVTGSIAVGDSLVQQVLGHGLASKLSARLGEGVINGLMTARIGIAAMDLCRPLAFHALKRPGIGDFIGDLTPSMSPRGNTP.

A disordered region spans residues 1–43 (MSKPPSDPPRRPPAAFTYEDEATERHDNGRQAERRRKPESFSE). Residues 23-40 (TERHDNGRQAERRRKPES) are compositionally biased toward basic and acidic residues. Transmembrane regions (helical) follow at residues 77-97 (FGKIAAGAFGILLSLGIGLWT) and 111-131 (LGYLALAVLAVGVLAVLALVI).

It belongs to the UPF0283 family.

It localises to the cell inner membrane. This chain is UPF0283 membrane protein Rleg2_1967, found in Rhizobium leguminosarum bv. trifolii (strain WSM2304).